A 934-amino-acid chain; its full sequence is Leucine--tRNA ligase 1 (934 aa).

Residues 41 to 51 (PYTNSPMHVGH) carry the 'HIGH' region motif. Residues 616-620 (KMSKS) carry the 'KMSKS' region motif. Lys-619 is an ATP binding site.

Belongs to the class-I aminoacyl-tRNA synthetase family.

It localises to the cytoplasm. It carries out the reaction tRNA(Leu) + L-leucine + ATP = L-leucyl-tRNA(Leu) + AMP + diphosphate. The sequence is that of Leucine--tRNA ligase 1 from Saccharolobus solfataricus (strain ATCC 35092 / DSM 1617 / JCM 11322 / P2) (Sulfolobus solfataricus).